The chain runs to 314 residues: Serine hydrolase-like protein 2 (314 aa).

Positions 33–293 (PPVLCLHGWL…GNHCVHMSEP (261 aa)) constitute an AB hydrolase-1 domain. Ser108 is a catalytic residue.

The protein belongs to the AB hydrolase superfamily.

Its subcellular location is the cytoplasm. It is found in the perinuclear region. The protein resides in the peroxisome. Functionally, probable serine hydrolase. May be related to cell muscle hypertrophy. The chain is Serine hydrolase-like protein 2 (SERHL2) from Homo sapiens (Human).